Reading from the N-terminus, the 159-residue chain is Ribosomal RNA large subunit methyltransferase H (159 aa).

Residues Leu76, Gly108, and 127 to 132 (FSKMTL) contribute to the S-adenosyl-L-methionine site.

Belongs to the RNA methyltransferase RlmH family. As to quaternary structure, homodimer.

The protein localises to the cytoplasm. It carries out the reaction pseudouridine(1915) in 23S rRNA + S-adenosyl-L-methionine = N(3)-methylpseudouridine(1915) in 23S rRNA + S-adenosyl-L-homocysteine + H(+). Specifically methylates the pseudouridine at position 1915 (m3Psi1915) in 23S rRNA. This chain is Ribosomal RNA large subunit methyltransferase H, found in Bacillus thuringiensis subsp. konkukian (strain 97-27).